The sequence spans 180 residues: Putative manganese efflux pump MntP (180 aa).

Helical transmembrane passes span 1–21, 34–54, 63–83, 103–123, 129–149, and 160–180; these read MLSV…ISIT, ILWY…IGYV, ISTY…LNMI, VTLL…TFAI, VIPC…GIFI, and KFQI…LLGF.

It belongs to the MntP (TC 9.B.29) family.

It localises to the cell membrane. Functionally, probably functions as a manganese efflux pump. This chain is Putative manganese efflux pump MntP, found in Methanosphaera stadtmanae (strain ATCC 43021 / DSM 3091 / JCM 11832 / MCB-3).